Here is a 140-residue protein sequence, read N- to C-terminus: Small ribosomal subunit protein uS19 (140 aa).

The protein belongs to the universal ribosomal protein uS19 family.

In terms of biological role, protein S19 forms a complex with S13 that binds strongly to the 16S ribosomal RNA. The protein is Small ribosomal subunit protein uS19 of Methanocella arvoryzae (strain DSM 22066 / NBRC 105507 / MRE50).